Here is a 66-residue protein sequence, read N- to C-terminus: Large ribosomal subunit protein bL33c (66 aa).

This sequence belongs to the bacterial ribosomal protein bL33 family.

It localises to the plastid. It is found in the chloroplast. The sequence is that of Large ribosomal subunit protein bL33c from Ceratophyllum demersum (Rigid hornwort).